Consider the following 270-residue polypeptide: Formamidopyrimidine-DNA glycosylase (270 aa).

Proline 2 functions as the Schiff-base intermediate with DNA in the catalytic mechanism. The active-site Proton donor is glutamate 3. The Proton donor; for beta-elimination activity role is filled by lysine 58. Histidine 91, arginine 110, and arginine 151 together coordinate DNA. The segment at 236–270 (FVYGRGGEFCKSCGSTLREIRLGQRASVYCSRCQR) adopts an FPG-type zinc-finger fold. Arginine 260 acts as the Proton donor; for delta-elimination activity in catalysis.

The protein belongs to the FPG family. Monomer. It depends on Zn(2+) as a cofactor.

The catalysed reaction is Hydrolysis of DNA containing ring-opened 7-methylguanine residues, releasing 2,6-diamino-4-hydroxy-5-(N-methyl)formamidopyrimidine.. It carries out the reaction 2'-deoxyribonucleotide-(2'-deoxyribose 5'-phosphate)-2'-deoxyribonucleotide-DNA = a 3'-end 2'-deoxyribonucleotide-(2,3-dehydro-2,3-deoxyribose 5'-phosphate)-DNA + a 5'-end 5'-phospho-2'-deoxyribonucleoside-DNA + H(+). In terms of biological role, involved in base excision repair of DNA damaged by oxidation or by mutagenic agents. Acts as a DNA glycosylase that recognizes and removes damaged bases. Has a preference for oxidized purines, such as 7,8-dihydro-8-oxoguanine (8-oxoG). Has AP (apurinic/apyrimidinic) lyase activity and introduces nicks in the DNA strand. Cleaves the DNA backbone by beta-delta elimination to generate a single-strand break at the site of the removed base with both 3'- and 5'-phosphates. The protein is Formamidopyrimidine-DNA glycosylase of Stutzerimonas stutzeri (strain A1501) (Pseudomonas stutzeri).